The chain runs to 302 residues: Ribonucleoside-diphosphate reductase small subunit (302 aa).

Residues Glu61, Glu91, and His94 each contribute to the Fe cation site. Residue Tyr98 is part of the active site. Residues 147-167 (ILVFLLIEGIFFISSFYSIAL) form a helical membrane-spanning segment. Glu154, Glu188, and His191 together coordinate Fe cation.

The protein belongs to the ribonucleoside diphosphate reductase small chain family. In terms of assembly, heterotetramer composed of a homodimer of the large subunit (R1) and a homodimer of the small subunit (R2). Larger multisubunit protein complex are also active, composed of (R1)n(R2)n. Requires Fe cation as cofactor.

It is found in the host membrane. The enzyme catalyses a 2'-deoxyribonucleoside 5'-diphosphate + [thioredoxin]-disulfide + H2O = a ribonucleoside 5'-diphosphate + [thioredoxin]-dithiol. In terms of biological role, ribonucleoside-diphosphate reductase holoenzyme provides the precursors necessary for viral DNA synthesis. Allows virus growth in non-dividing cells, as well as reactivation from latency in infected hosts. Catalyzes the biosynthesis of deoxyribonucleotides from the corresponding ribonucleotides. In Homo sapiens (Human), this protein is Ribonucleoside-diphosphate reductase small subunit.